The primary structure comprises 78 residues: U-scoloptoxin(04)-Er1d (78 aa).

Positions 1–24 are cleaved as a signal peptide; sequence MTRHLIFAAMLLVCLFVCWNAVGA. A propeptide spanning residues 25-28 is cleaved from the precursor; sequence RDAR.

This sequence belongs to the scoloptoxin-04 family. Contains 2 disulfide bonds. In terms of tissue distribution, expressed by the venom gland.

It is found in the secreted. This chain is U-scoloptoxin(04)-Er1d, found in Ethmostigmus rubripes (Giant centipede).